Consider the following 172-residue polypeptide: Sec-independent protein translocase protein TatB (172 aa).

Residues 1–21 (MIDLGISKLALIGAVALVVIG) form a helical membrane-spanning segment. The interval 97 to 129 (GDPASRQTATQAAEWRPAPAKSRNGRNSWRNKQ) is disordered.

The protein belongs to the TatB family. As to quaternary structure, the Tat system comprises two distinct complexes: a TatABC complex, containing multiple copies of TatA, TatB and TatC subunits, and a separate TatA complex, containing only TatA subunits. Substrates initially bind to the TatABC complex, which probably triggers association of the separate TatA complex to form the active translocon.

Its subcellular location is the cell inner membrane. Functionally, part of the twin-arginine translocation (Tat) system that transports large folded proteins containing a characteristic twin-arginine motif in their signal peptide across membranes. Together with TatC, TatB is part of a receptor directly interacting with Tat signal peptides. TatB may form an oligomeric binding site that transiently accommodates folded Tat precursor proteins before their translocation. The protein is Sec-independent protein translocase protein TatB of Ralstonia nicotianae (strain ATCC BAA-1114 / GMI1000) (Ralstonia solanacearum).